The sequence spans 328 residues: PhoH-like protein (328 aa).

Residue 135 to 142 (GPAGTGKT) participates in ATP binding.

The protein belongs to the PhoH family.

Its subcellular location is the cytoplasm. This chain is PhoH-like protein, found in Synechocystis sp. (strain ATCC 27184 / PCC 6803 / Kazusa).